Here is a 432-residue protein sequence, read N- to C-terminus: 3-phosphoshikimate 1-carboxyvinyltransferase (432 aa).

3-phosphoshikimate contacts are provided by Lys-22, Ser-23, and Arg-27. Position 22 (Lys-22) interacts with phosphoenolpyruvate. Phosphoenolpyruvate is bound by residues Gly-96 and Arg-127. The 3-phosphoshikimate site is built by Ser-173, Ser-174, Gln-175, Ser-201, Asp-316, Asn-339, and Lys-343. Residue Gln-175 coordinates phosphoenolpyruvate. Asp-316 acts as the Proton acceptor in catalysis. Arg-347, Arg-391, and Lys-416 together coordinate phosphoenolpyruvate.

Belongs to the EPSP synthase family. Monomer.

It is found in the cytoplasm. The catalysed reaction is 3-phosphoshikimate + phosphoenolpyruvate = 5-O-(1-carboxyvinyl)-3-phosphoshikimate + phosphate. It functions in the pathway metabolic intermediate biosynthesis; chorismate biosynthesis; chorismate from D-erythrose 4-phosphate and phosphoenolpyruvate: step 6/7. Functionally, catalyzes the transfer of the enolpyruvyl moiety of phosphoenolpyruvate (PEP) to the 5-hydroxyl of shikimate-3-phosphate (S3P) to produce enolpyruvyl shikimate-3-phosphate and inorganic phosphate. In Histophilus somni (strain 2336) (Haemophilus somnus), this protein is 3-phosphoshikimate 1-carboxyvinyltransferase.